The chain runs to 115 residues: UPF0102 protein SYO3AOP1_0546 (115 aa).

It belongs to the UPF0102 family.

The chain is UPF0102 protein SYO3AOP1_0546 from Sulfurihydrogenibium sp. (strain YO3AOP1).